The sequence spans 254 residues: MTQAFTVVIPARYASTRLPGKPLQDIAGQPMIQRVWNQARKSAASRVVVATDDERILAACQGFGAEALLTRAEHNSGTDRLEEVASRLGLASDAIVVNVQGDEPLIPPALIDQVAANLAAHPEAAIATLAEPIHEVSALFNPNVVKVATDIDGLALTFSRAPLPWARDAFARDRDSLPEGVPYRRHIGIYAYRVGFLADFVAWGPCWLENAESLEQLRALWHGVRIHVADARENMLPGVDTPEDLERVRRVLGG.

The protein belongs to the KdsB family.

The protein localises to the cytoplasm. The catalysed reaction is 3-deoxy-alpha-D-manno-oct-2-ulosonate + CTP = CMP-3-deoxy-beta-D-manno-octulosonate + diphosphate. The protein operates within nucleotide-sugar biosynthesis; CMP-3-deoxy-D-manno-octulosonate biosynthesis; CMP-3-deoxy-D-manno-octulosonate from 3-deoxy-D-manno-octulosonate and CTP: step 1/1. Its pathway is bacterial outer membrane biogenesis; lipopolysaccharide biosynthesis. In terms of biological role, activates KDO (a required 8-carbon sugar) for incorporation into bacterial lipopolysaccharide in Gram-negative bacteria. This is 3-deoxy-manno-octulosonate cytidylyltransferase from Pseudomonas aeruginosa (strain ATCC 15692 / DSM 22644 / CIP 104116 / JCM 14847 / LMG 12228 / 1C / PRS 101 / PAO1).